Reading from the N-terminus, the 423-residue chain is Enolase (423 aa).

Q165 serves as a coordination point for (2R)-2-phosphoglycerate. The active-site Proton donor is E209. Mg(2+) contacts are provided by D244, E285, and D310. (2R)-2-phosphoglycerate contacts are provided by K335, R364, S365, and K386. Catalysis depends on K335, which acts as the Proton acceptor.

Belongs to the enolase family. As to quaternary structure, homooctamer formed by a tetramer of dimers. Mg(2+) serves as cofactor.

It localises to the cytoplasm. The protein localises to the secreted. It is found in the cell surface. It catalyses the reaction (2R)-2-phosphoglycerate = phosphoenolpyruvate + H2O. Its pathway is carbohydrate degradation; glycolysis; pyruvate from D-glyceraldehyde 3-phosphate: step 4/5. With respect to regulation, the covalent binding to the substrate causes inactivation of the enzyme, and possibly serves as a signal for the export of the protein. Its function is as follows. Catalyzes the reversible conversion of 2-phosphoglycerate (2-PG) into phosphoenolpyruvate (PEP). It is essential for the degradation of carbohydrates via glycolysis. This Methanocaldococcus jannaschii (strain ATCC 43067 / DSM 2661 / JAL-1 / JCM 10045 / NBRC 100440) (Methanococcus jannaschii) protein is Enolase.